The following is a 640-amino-acid chain: tRNA uridine 5-carboxymethylaminomethyl modification enzyme MnmG (640 aa).

Residue 9-14 (GGGHAG) coordinates FAD. 289–303 (GPRYCPSIEDKINKF) contributes to the NAD(+) binding site.

It belongs to the MnmG family. Homodimer. Heterotetramer of two MnmE and two MnmG subunits. It depends on FAD as a cofactor.

It is found in the cytoplasm. In terms of biological role, NAD-binding protein involved in the addition of a carboxymethylaminomethyl (cmnm) group at the wobble position (U34) of certain tRNAs, forming tRNA-cmnm(5)s(2)U34. The sequence is that of tRNA uridine 5-carboxymethylaminomethyl modification enzyme MnmG from Campylobacter hominis (strain ATCC BAA-381 / DSM 21671 / CCUG 45161 / LMG 19568 / NCTC 13146 / CH001A).